A 174-amino-acid chain; its full sequence is Ubiquinone biosynthesis accessory factor UbiT (174 aa).

The SCP2 domain maps to 45–133 (LDDGELEFLE…LGLYVKNLMD (89 aa)).

This sequence belongs to the UbiT family.

It functions in the pathway cofactor biosynthesis; ubiquinone biosynthesis. Its function is as follows. Required for O(2)-independent ubiquinone (coenzyme Q) biosynthesis. Likely functions as an accessory factor. The polypeptide is Ubiquinone biosynthesis accessory factor UbiT (Escherichia coli O157:H7).